Consider the following 230-residue polypeptide: Prepilin leader peptidase/N-methyltransferase (230 aa).

The next 7 helical transmembrane spans lie at 1–21 (MIYF…WFYL), 60–80 (GHIL…QIAF), 84–104 (IFTV…YLDW), 114–134 (CLWL…LLTL), 140–160 (SAAS…FYYG), 181–201 (LETL…FSLI), and 208–228 (FLPF…VKYY).

This sequence belongs to the peptidase A24 family.

The protein resides in the cell inner membrane. It carries out the reaction Typically cleaves a -Gly-|-Phe- bond to release an N-terminal, basic peptide of 5-8 residues from type IV prepilin, and then N-methylates the new N-terminal amino group, the methyl donor being S-adenosyl-L-methionine.. In terms of biological role, plays a role in type II pseudopili formation by proteolytically removing the leader sequence from substrate proteins and subsequently monomethylating the alpha-amino group of the newly exposed N-terminal phenylalanine. Substrates include proteins required for biogenesis of the type II general secretory apparatus. In Haemophilus influenzae (strain ATCC 51907 / DSM 11121 / KW20 / Rd), this protein is Prepilin leader peptidase/N-methyltransferase (hofD).